An 884-amino-acid polypeptide reads, in one-letter code: Protein translocase subunit SecA (884 aa).

Residues Gln-88, 106 to 110 (GEGKT), and Asp-509 contribute to the ATP site. The interval 822–884 (EQKKLKMSGA…PKKGLFANND (63 aa)) is disordered. Positions 833–842 (KGGEDLEETK) are enriched in basic and acidic residues. The Zn(2+) site is built by Cys-858, Cys-860, Cys-869, and His-870.

Belongs to the SecA family. In terms of assembly, monomer and homodimer. Part of the essential Sec protein translocation apparatus which comprises SecA, SecYEG and auxiliary proteins SecDF-YajC and YidC. It depends on Zn(2+) as a cofactor.

Its subcellular location is the cell inner membrane. It localises to the cytoplasm. The enzyme catalyses ATP + H2O + cellular proteinSide 1 = ADP + phosphate + cellular proteinSide 2.. Part of the Sec protein translocase complex. Interacts with the SecYEG preprotein conducting channel. Has a central role in coupling the hydrolysis of ATP to the transfer of proteins into and across the cell membrane, serving as an ATP-driven molecular motor driving the stepwise translocation of polypeptide chains across the membrane. The chain is Protein translocase subunit SecA from Campylobacter hominis (strain ATCC BAA-381 / DSM 21671 / CCUG 45161 / LMG 19568 / NCTC 13146 / CH001A).